Reading from the N-terminus, the 400-residue chain is Phosphoglycerate kinase (400 aa).

Residues 21–23 (DFN), R36, 59–62 (HLGR), R119, and R160 contribute to the substrate site. Residues K211, E329, and 356 to 359 (GGDS) contribute to the ATP site.

The protein belongs to the phosphoglycerate kinase family. In terms of assembly, monomer.

It is found in the cytoplasm. It carries out the reaction (2R)-3-phosphoglycerate + ATP = (2R)-3-phospho-glyceroyl phosphate + ADP. It functions in the pathway carbohydrate degradation; glycolysis; pyruvate from D-glyceraldehyde 3-phosphate: step 2/5. The protein is Phosphoglycerate kinase of Lactiplantibacillus plantarum (strain ATCC BAA-793 / NCIMB 8826 / WCFS1) (Lactobacillus plantarum).